The primary structure comprises 382 residues: F-box/LRR-repeat/kelch-repeat protein At1g09650 (382 aa).

The region spanning 7–52 is the F-box domain; the sequence is CLMMESLPHEVVECILERLDADPLLRFKAVSKQWKSTIESPFFQRR. Residues 78–101 form an LRR 1 repeat; that stretch reads IEALTTLVLGSSSSVKIPTPWEEE. A Kelch 1 repeat occupies 180-227; the sequence is PVWLYNSIEIGLENATTCEVFDFSTNAWRYVSPAAPYRIVGCPAPVCV. The LRR 2 repeat unit spans residues 239 to 262; the sequence is ETKILSFDLHTETFQVVSKAPFAN. The stretch at 270–319 is one Kelch 2 repeat; it reads MCNLDNRLCVSEMKLPNQVIWSFNSGNKTWHKMCSINLDITSRWFGPTQV.

The polypeptide is F-box/LRR-repeat/kelch-repeat protein At1g09650 (Arabidopsis thaliana (Mouse-ear cress)).